We begin with the raw amino-acid sequence, 783 residues long: Flavin carrier protein 2 (783 aa).

An N-terminal signal peptide occupies residues methionine 1–alanine 22. Residues arginine 23 to alanine 182 are Lumenal-facing. 4 N-linked (GlcNAc...) asparagine glycosylation sites follow: asparagine 28, asparagine 65, asparagine 81, and asparagine 156. The chain crosses the membrane as a helical span at residues alanine 183 to isoleucine 203. Residues glycine 204 to histidine 211 lie on the Cytoplasmic side of the membrane. A helical transmembrane segment spans residues isoleucine 212–methionine 232. Residues glycine 233–asparagine 347 are Lumenal-facing. Residue asparagine 323 is glycosylated (N-linked (GlcNAc...) asparagine). Residues phenylalanine 348 to isoleucine 368 form a helical membrane-spanning segment. At phenylalanine 369–glycine 402 the chain is on the cytoplasmic side. A helical transmembrane segment spans residues threonine 403–phenylalanine 423. Residues threonine 424–alanine 430 lie on the Lumenal side of the membrane. The chain crosses the membrane as a helical span at residues isoleucine 431–isoleucine 451. The Cytoplasmic segment spans residues arginine 452–lysine 492. The chain crosses the membrane as a helical span at residues phenylalanine 493–leucine 513. Residues glutamine 514–alanine 521 are Lumenal-facing. The helical transmembrane segment at methionine 522–leucine 542 threads the bilayer. Topologically, residues aspartate 543–asparagine 547 are cytoplasmic. The helical transmembrane segment at valine 548–serine 568 threads the bilayer. The Lumenal portion of the chain corresponds to asparagine 569–methionine 581. Residues alanine 582–valine 602 traverse the membrane as a helical segment. Residues threonine 603–leucine 783 lie on the Cytoplasmic side of the membrane. A disordered region spans residues arginine 681 to leucine 783. Residues serine 688 to serine 697 are compositionally biased toward low complexity. Composition is skewed to polar residues over residues valine 704–leucine 748 and tyrosine 756–phenylalanine 767. Low complexity predominate over residues asparagine 768–leucine 783.

Belongs to the transient receptor potential (TRP) ion channel family.

The protein resides in the endoplasmic reticulum membrane. In terms of biological role, may be responsible for the transport of FAD into the endoplasmic reticulum lumen, where it is required for oxidative protein folding. The polypeptide is Flavin carrier protein 2 (FLC2) (Saccharomyces cerevisiae (strain ATCC 204508 / S288c) (Baker's yeast)).